The sequence spans 194 residues: Peptidyl-tRNA hydrolase (194 aa).

Tyr-16 provides a ligand contact to tRNA. His-21 serves as the catalytic Proton acceptor. TRNA-binding residues include Phe-67, Asn-69, and Asn-115.

This sequence belongs to the PTH family. As to quaternary structure, monomer.

Its subcellular location is the cytoplasm. It catalyses the reaction an N-acyl-L-alpha-aminoacyl-tRNA + H2O = an N-acyl-L-amino acid + a tRNA + H(+). Functionally, hydrolyzes ribosome-free peptidyl-tRNAs (with 1 or more amino acids incorporated), which drop off the ribosome during protein synthesis, or as a result of ribosome stalling. Its function is as follows. Catalyzes the release of premature peptidyl moieties from peptidyl-tRNA molecules trapped in stalled 50S ribosomal subunits, and thus maintains levels of free tRNAs and 50S ribosomes. This is Peptidyl-tRNA hydrolase from Sodalis glossinidius (strain morsitans).